A 146-amino-acid polypeptide reads, in one-letter code: Basic phospholipase A2 73 (146 aa).

An N-terminal signal peptide occupies residues 1-19 (MYPAHLLVLLAVCVSLLGA). Positions 20–27 (ASIPPLPL) are excised as a propeptide. 7 disulfides stabilise this stretch: C38–C98, C54–C145, C56–C72, C71–C126, C78–C119, C87–C112, and C105–C117. Positions 55, 57, and 59 each coordinate Ca(2+). Residue H75 is part of the active site. Ca(2+) is bound at residue D76. The active site involves D120.

The protein belongs to the phospholipase A2 family. Group I subfamily. D49 sub-subfamily. Ca(2+) is required as a cofactor. Expressed by the venom gland.

Its subcellular location is the secreted. It carries out the reaction a 1,2-diacyl-sn-glycero-3-phosphocholine + H2O = a 1-acyl-sn-glycero-3-phosphocholine + a fatty acid + H(+). Its function is as follows. Snake venom phospholipase A2 (PLA2) that inhibits neuromuscular transmission by blocking acetylcholine release from the nerve termini. PLA2 catalyzes the calcium-dependent hydrolysis of the 2-acyl groups in 3-sn-phosphoglycerides. In Hydrophis hardwickii (Hardwick's spine-bellied seasnake), this protein is Basic phospholipase A2 73.